The following is a 94-amino-acid chain: Co-chaperonin GroES (94 aa).

A disordered region spans residues 17-53; the sequence is DSNPNSPIQLPDSAKKKPTKGKVVSVGPGASNSDGKV.

This sequence belongs to the GroES chaperonin family. Heptamer of 7 subunits arranged in a ring. Interacts with the chaperonin GroEL.

It localises to the cytoplasm. Functionally, together with the chaperonin GroEL, plays an essential role in assisting protein folding. The GroEL-GroES system forms a nano-cage that allows encapsulation of the non-native substrate proteins and provides a physical environment optimized to promote and accelerate protein folding. GroES binds to the apical surface of the GroEL ring, thereby capping the opening of the GroEL channel. This chain is Co-chaperonin GroES, found in Anaplasma phagocytophilum (strain HZ).